A 263-amino-acid polypeptide reads, in one-letter code: tRNA (guanine-N(7)-)-methyltransferase (263 aa).

The interval 1–39 is disordered; the sequence is MVHHGQMHAQPGVGLRPDTPVASGQLPSTSIRSRRSGIS. E82, D107, N136, and D159 together coordinate S-adenosyl-L-methionine. The active site involves D159. Residues K163, D195, and 232-235 each bind substrate; that span reads TKYE.

This sequence belongs to the class I-like SAM-binding methyltransferase superfamily. TrmB family.

The enzyme catalyses guanosine(46) in tRNA + S-adenosyl-L-methionine = N(7)-methylguanosine(46) in tRNA + S-adenosyl-L-homocysteine. It participates in tRNA modification; N(7)-methylguanine-tRNA biosynthesis. In terms of biological role, catalyzes the formation of N(7)-methylguanine at position 46 (m7G46) in tRNA. The sequence is that of tRNA (guanine-N(7)-)-methyltransferase from Mycobacterium bovis (strain ATCC BAA-935 / AF2122/97).